The chain runs to 388 residues: uncharacterized protein (388 aa).

Belongs to the glycosyltransferase 28 family.

This is an uncharacterized protein from Methanosarcina acetivorans (strain ATCC 35395 / DSM 2834 / JCM 12185 / C2A).